We begin with the raw amino-acid sequence, 260 residues long: Adenosylcobinamide-GDP ribazoletransferase (260 aa).

7 helical membrane passes run 31–51 (FYFL…PIYF), 57–77 (IEIS…SIHL), 108–128 (YGTI…STII), 131–151 (AGLL…VVVF), 173–193 (FFFW…IAAF), 206–226 (LKYL…IRIS), and 240–260 (LIVE…NVHL).

This sequence belongs to the CobS family. Requires Mg(2+) as cofactor.

The protein resides in the cell inner membrane. The catalysed reaction is alpha-ribazole + adenosylcob(III)inamide-GDP = adenosylcob(III)alamin + GMP + H(+). The enzyme catalyses alpha-ribazole 5'-phosphate + adenosylcob(III)inamide-GDP = adenosylcob(III)alamin 5'-phosphate + GMP + H(+). It participates in cofactor biosynthesis; adenosylcobalamin biosynthesis; adenosylcobalamin from cob(II)yrinate a,c-diamide: step 7/7. Functionally, joins adenosylcobinamide-GDP and alpha-ribazole to generate adenosylcobalamin (Ado-cobalamin). Also synthesizes adenosylcobalamin 5'-phosphate from adenosylcobinamide-GDP and alpha-ribazole 5'-phosphate. The chain is Adenosylcobinamide-GDP ribazoletransferase from Treponema denticola (strain ATCC 35405 / DSM 14222 / CIP 103919 / JCM 8153 / KCTC 15104).